Here is a 138-residue protein sequence, read N- to C-terminus: Thyrotropin subunit beta (138 aa).

A signal peptide spans 1–20 (MTATFLMSLLFGLAFGQTMS). 6 cysteine pairs are disulfide-bonded: Cys22–Cys72, Cys36–Cys87, Cys39–Cys125, Cys47–Cys103, Cys51–Cys105, and Cys108–Cys115. Asn43 carries an N-linked (GlcNAc...) asparagine glycan. Positions 133 to 138 (LVGFPV) are excised as a propeptide.

Belongs to the glycoprotein hormones subunit beta family. Heterodimer of a common alpha chain and a unique beta chain which confers biological specificity to thyrotropin, lutropin, follitropin and gonadotropin.

The protein resides in the secreted. In terms of biological role, indispensable for the control of thyroid structure and metabolism. The polypeptide is Thyrotropin subunit beta (TSHB) (Monodelphis domestica (Gray short-tailed opossum)).